The sequence spans 2126 residues: MGLGSAASGTGADRGAWTLAEPRVTPVAVIGMACRLPGGIDSPELLWKALLRGDDLITEVPPDRWDCDEFYDPQPGVPGRTVCKWGGFLDNPADFDCEFFGIGEREAIAIDPQQRLLLETSWEAMEHAGLTQQTLAGSATGVFAGVTHGDYTMVAADAKQLEEPYGYLGNSFSMASGRVAYAMRLHGPAITVDTACSSGLTAVHMACRSLHEGESDVALAGGVALMLEPRKAAAGSALGMLSPTGRCRAFDVAADGFVSGEGCAVVVLKRLPDALADGDRILAVIRGTSANQDGHTVNIATPSQPAQVAAYRAALAAGGVDAATVGMVEAHGPGTPIGDPIEYASVSEVYGVDGPCALASVKTNFGHTQSTAGVLGLIKVVLALKHGVVPRNLHFTRLPDEIAGITTNLFVPEVTTPWPTNGRQVPRRAAVSSYGFSGTNVHAVVEQAPQTEAQPHAASTPPTGTPALFTLSASSADALRQTAQRLTDWIQQHADSLVLSDLAYTLARRRTHRSVRTAVIASSVDELIAGLGEVADGDTVYQPAVGQDDRGPVWLFSGQGSQWAAMGADLLTNESVFAATVAELEPLIAAESGFSVTEAMTAPETVTGIDRVQPTIFAMQVALAATMAAYGVRPGAVIGHSMGESAAAVVAGVLSAEDGVRVICRRSKLMATIAGSAAMASVELPALAVQSELTALGIDDVVVAVVTAPQSTVIAGGTESVRKLVDIWERRDVLARAVAVDVASHSPQVDPILDELIAALADLNPKAPEIPYYSATLFDPREAPACDARYWADNLRHTVRFSAAVRSALDDGYRVFAELSPHPLLTHAVDQIAGSVGMPVAALAGMRREQPLPLGLRRLLTDLHNAGAAVDFSVLCPQGRLVDAPLPAWSHRFLFYDREGVDNRSPGGSTVAVHPLLGAHVRLPEEPERHAWQADVGTATLPWLGDHRIHNVAALPGAAYCEMALSAARAVLGEQSEVRDMRFEAMLLLDDQTPVSTVATVTSPGVVDFAVEALQEGVGHHLRRASAVLQQVSGECEPPAYDMASLLEAHPCRVDGEDLRRQFDKHGVQYGPAFTGLAVAYVAEDATATMLAEVALPGSIRSQQGLYAIHPALLDACFQSVGAHPDSQSVGSGLLVPLGVRRVRAYAPVRTARYCYTRVTKVELVGVEADIDVLDAHGTVLLAVCGLRIGTGVSERDKHNRVLNERLLTIEWHQRELPEMDPSGAGKWLLISDCAASDVTATRLADAFREHSAACTTMRWPLHDDQLAAADQLRDQVGSDEFSGVVVLTGSNTGTPHQGSADRGAEYVRRLVGIARELSDLPGAVPRMYVVTRGAQRVLADDCVNLEQGGLRGLLRTIGAEHPHLRATQIDVDEQTGVEQLARQLLATSEEDETAWRDNEWYVARLCPTPLRPQERRTIVADHQQSGMRLQIRTPGDMQTIELAAFHRVPPGPGQIEVAVRASSVNFADVLIAFGRYPSFEGHLPQLGTDFAGVVTAVGPGVTDHKVGDHVGGMSPNGCWGTFVTCDARLAATLPPGLGDAQAAAVTTAHATAWYGLHELARIRAGDTVLIHSGTGGVGQAAIAIARAAGAEIFATAGTPQRRELLRNMGIEHVYDSRSIEFAEQIRRDTNGRGVDVVLNSVTGAAQLAGLKLLAFRGRFVEIGKRDIYGDTKLGLFPFRRNLSFYAVDLGLLSATHPEELRDLLGTVYRLTAAGELPMPQSTHYPLVEAATAIRVMGNAEHTGKLVLHIPQTGKSLVTLPPEQAQVFRPDGSYIITGGLGGLGLFLAEKMAAAGCGRIVLNSRTQPTQKMRETIEAIAAMGSEVVVECGDIAQPGTAERLVATAVATGLPVRGVLHAAAVVEDATLANITDELLARDWAPKVHGAWELHEATSGQPLDWFCLFSSAAALTGSPGQSAYSAANSWLDAFAHWRQAQGLPATAIAWGAWSDIGQLGWWSASPARASALEESNYTAITPDEGAYAFEALLRHNRVYTGYAPVIGAPWLVAFAERSRFFEVFSSSNGSGTSKFRVELNELPRDEWPARLRQLVAEQVSLILRRTVDPDRPLPEYGLDSLGALELRTRIETETGIRLAPKNVSATVRGLADHLYEQLAPDDAPAAALSSQ.

A Ketosynthase family 3 (KS3) domain is found at Val24–Gln447. Residue Cys196 is the Acyl-thioester intermediate; for beta-ketoacyl synthase activity of the active site. Residues His331 and His367 each act as for beta-ketoacyl synthase activity in the active site. The linker domain (LD) stretch occupies residues Pro449–Asp549. An acyltransferase (AT) region spans residues Arg550–Glu849. The active-site Acyl-ester intermediate; for acyltransferase activity is Ser641. Residues Ser909–Thr1191 are dehydratase (DH). Residues His914–Val1032 are N-terminal hotdog fold. The 285-residue stretch at His914 to Lys1198 folds into the PKS/mFAS DH domain. His947 acts as the Proton acceptor; for dehydratase activity in catalysis. A C-terminal hotdog fold region spans residues Pro1051 to Lys1198. The Proton donor; for dehydratase activity role is filled by Asp1115. The tract at residues Lys1227–Asp1398 is pseudo beta-ketoacyl reductase (PsiKR). An enoylreductase (ER) region spans residues Ser1426–Ile1750. Residues Gly1772–Phe2019 form a beta-ketoacyl reductase (KR) region. NADP(+) is bound by residues Leu1780 to Leu1783, Ser1803 to Gln1806, Asp1831 to Ile1832, and Phe1904 to Ser1905. Positions Asp2040–Gln2126 constitute a Carrier domain. Ser2075 is subject to O-(pantetheine 4'-phosphoryl)serine.

Requires pantetheine 4'-phosphate as cofactor.

It carries out the reaction hexadecanoyl-[(hydroxy)phthioceranic acid synthase] + 7 (S)-methylmalonyl-CoA + 14 NADPH + 21 H(+) = C37-phthioceranyl-[(hydroxy)phthioceranic acid synthase] + 7 CO2 + 14 NADP(+) + 7 CoA + 7 H2O. The enzyme catalyses hexadecanoyl-[(hydroxy)phthioceranic acid synthase] + 8 (S)-methylmalonyl-CoA + 16 NADPH + 24 H(+) = C40-phthioceranyl-[(hydroxy)phthioceranic acid synthase] + 8 CO2 + 16 NADP(+) + 8 CoA + 8 H2O. The protein operates within lipid metabolism; fatty acid biosynthesis. Its pathway is glycolipid metabolism; sulfolipid-1 biosynthesis. In terms of biological role, involved in sulfolipid-1 biosynthesis. Catalyzes the synthesis of the hepta- and octamethyl phthioceranic and hydroxyphthioceranic acids, the methyl-branched acyl constituents of sulfolipids. This Mycobacterium bovis (strain ATCC BAA-935 / AF2122/97) protein is Phthioceranic/hydroxyphthioceranic acid synthase (pks2).